The sequence spans 71 residues: DNA-directed RNA polymerase subunit omega (71 aa).

It belongs to the RNA polymerase subunit omega family. The RNAP catalytic core consists of 2 alpha, 1 beta, 1 beta' and 1 omega subunit. When a sigma factor is associated with the core the holoenzyme is formed, which can initiate transcription.

It carries out the reaction RNA(n) + a ribonucleoside 5'-triphosphate = RNA(n+1) + diphosphate. Promotes RNA polymerase assembly. Latches the N- and C-terminal regions of the beta' subunit thereby facilitating its interaction with the beta and alpha subunits. The chain is DNA-directed RNA polymerase subunit omega from Campylobacter curvus (strain 525.92).